An 808-amino-acid polypeptide reads, in one-letter code: DNA ligase (808 aa).

The segment at 1–30 (MSISDDISPVPPAPVSEPNAGQDAGQDAAP) is disordered. Residues 18–30 (PNAGQDAGQDAAP) show a composition bias toward low complexity. NAD(+) contacts are provided by residues 61 to 65 (DAEYD), 110 to 111 (SL), and Asp141. The N6-AMP-lysine intermediate role is filled by Lys143. Residues Arg164, Glu202, Lys334, and Lys358 each contribute to the NAD(+) site. Zn(2+)-binding residues include Cys453, Cys456, Cys471, and Cys476. The 90-residue stretch at 644–733 (EGSGPLAGLR…GGDVPEDGDG (90 aa)) folds into the BRCT domain. A disordered region spans residues 720 to 808 (LEGRGGDVPE…PRKKDQHSLL (89 aa)). Positions 727 to 742 (VPEDGDGAPGNEDEAP) are enriched in acidic residues. The segment covering 746–773 (ADVPAAPEVLADAPAAISADASSGVAPG) has biased composition (low complexity). Over residues 779 to 792 (DRADMTDRTVRTDS) the composition is skewed to basic and acidic residues.

This sequence belongs to the NAD-dependent DNA ligase family. LigA subfamily. The cofactor is Mg(2+). It depends on Mn(2+) as a cofactor.

It catalyses the reaction NAD(+) + (deoxyribonucleotide)n-3'-hydroxyl + 5'-phospho-(deoxyribonucleotide)m = (deoxyribonucleotide)n+m + AMP + beta-nicotinamide D-nucleotide.. Functionally, DNA ligase that catalyzes the formation of phosphodiester linkages between 5'-phosphoryl and 3'-hydroxyl groups in double-stranded DNA using NAD as a coenzyme and as the energy source for the reaction. It is essential for DNA replication and repair of damaged DNA. This chain is DNA ligase, found in Nitratidesulfovibrio vulgaris (strain DSM 19637 / Miyazaki F) (Desulfovibrio vulgaris).